Here is a 153-residue protein sequence, read N- to C-terminus: MARNTLSSRFRRVDIDEFDENKFVDEHEEAAAAAGEPGPDPCEVDGLLRQGDMLRAFHAALRNSPINTKNQAVKERAQGVVLKVLTNFKSSEIEQAVQSLDRNGIDLLMKYIYKGFEKPTENSSAVLLQWHEKALAVGGLGSIIRVLTARKTV.

Ser64 carries the phosphoserine modification.

It belongs to the ARPC5 family. May be a component of the Arp2/3 complex in which it may replace ARPC5.

The protein resides in the cytoplasm. It is found in the cytoskeleton. In terms of biological role, may function as component of the Arp2/3 complex which is involved in regulation of actin polymerization and together with an activating nucleation-promoting factor (NPF) mediates the formation of branched actin networks. This Mus musculus (Mouse) protein is Actin-related protein 2/3 complex subunit 5-like protein (Arpc5l).